The sequence spans 176 residues: Pro-glucagon (176 aa).

The first 20 residues, M1 to Q20, serve as a signal peptide directing secretion. The span at N25 to A35 shows a compositional bias: polar residues. Positions N25–T59 are disordered. Residue S54 is modified to Phosphoserine. Residues N84 to A89 constitute a propeptide that is removed on maturation. 2 positions are modified to phosphoserine: S105 and S108. The residue at position 127 (R127) is an Arginine amide. The propeptide occupies D131–R145. Phosphoserine occurs at positions 150 and 152.

This sequence belongs to the glucagon family. Post-translationally, proglucagon is post-translationally processed in a tissue-specific manner in pancreatic A cells and intestinal L cells. In pancreatic A cells, the major bioactive hormone is glucagon cleaved by PCSK2/PC2. In the intestinal L cells PCSK1/PC1 liberates GLP-1, GLP-2, glicentin and oxyntomodulin. GLP-1 is further N-terminally truncated by post-translational processing in the intestinal L cells resulting in GLP-1(7-37) GLP-1-(7-36)amide. The C-terminal amidation is neither important for the metabolism of GLP-1 nor for its effects on the endocrine pancreas. In terms of tissue distribution, glucagon is secreted in the A cells of the islets of Langerhans. GLP-1, GLP-2, oxyntomodulin and glicentin are secreted from enteroendocrine cells throughout the gastrointestinal tract. GLP-1 and GLP-2 are also secreted in selected neurons in the brain.

It localises to the secreted. Functionally, plays a key role in glucose metabolism and homeostasis. Regulates blood glucose by increasing gluconeogenesis and decreasing glycolysis. A counterregulatory hormone of insulin, raises plasma glucose levels in response to insulin-induced hypoglycemia. Plays an important role in initiating and maintaining hyperglycemic conditions in diabetes. Its function is as follows. Potent stimulator of glucose-dependent insulin release. Also stimulates insulin release in response to IL6. Plays important roles on gastric motility and the suppression of plasma glucagon levels. May be involved in the suppression of satiety and stimulation of glucose disposal in peripheral tissues, independent of the actions of insulin. Has growth-promoting activities on intestinal epithelium. May also regulate the hypothalamic pituitary axis (HPA) via effects on LH, TSH, CRH, oxytocin, and vasopressin secretion. Increases islet mass through stimulation of islet neogenesis and pancreatic beta cell proliferation. Inhibits beta cell apoptosis. In terms of biological role, stimulates intestinal growth and up-regulates villus height in the small intestine, concomitant with increased crypt cell proliferation and decreased enterocyte apoptosis. The gastrointestinal tract, from the stomach to the colon is the principal target for GLP-2 action. Plays a key role in nutrient homeostasis, enhancing nutrient assimilation through enhanced gastrointestinal function, as well as increasing nutrient disposal. Stimulates intestinal glucose transport and decreases mucosal permeability. Significantly reduces food intake. Inhibits gastric emptying in humans. Suppression of gastric emptying may lead to increased gastric distension, which may contribute to satiety by causing a sensation of fullness. Functionally, may modulate gastric acid secretion and the gastro-pyloro-duodenal activity. May play an important role in intestinal mucosal growth in the early period of life. This chain is Pro-glucagon (GCG), found in Ovis aries (Sheep).